We begin with the raw amino-acid sequence, 364 residues long: DNA replication and repair protein RecF (364 aa).

30-37 (GRNAQGKT) contacts ATP.

This sequence belongs to the RecF family.

The protein resides in the cytoplasm. Its function is as follows. The RecF protein is involved in DNA metabolism; it is required for DNA replication and normal SOS inducibility. RecF binds preferentially to single-stranded, linear DNA. It also seems to bind ATP. The chain is DNA replication and repair protein RecF from Pelotomaculum thermopropionicum (strain DSM 13744 / JCM 10971 / SI).